Consider the following 218-residue polypeptide: Adenylate kinase (218 aa).

Position 11-16 (11-16 (GAGKGT)) interacts with ATP. The segment at 31-60 (STGDMFREAMANKTKVGLEAKSYIDKGNLV) is NMP. Residues Thr32, Arg37, 58–60 (NLV), 86–89 (GFPR), and Gln93 contribute to the AMP site. Residues 127-165 (ARYMCKNCGATYNKLSKQPKVEGTCDRCGSHEFYQREDD) form an LID region. Residue Arg128 coordinates ATP. Positions 131 and 134 each coordinate Zn(2+). An ATP-binding site is contributed by 137 to 138 (TY). Positions 151 and 154 each coordinate Zn(2+). 2 residues coordinate AMP: Arg162 and Arg173. Gln201 is a binding site for ATP.

It belongs to the adenylate kinase family. In terms of assembly, monomer.

Its subcellular location is the cytoplasm. The catalysed reaction is AMP + ATP = 2 ADP. It functions in the pathway purine metabolism; AMP biosynthesis via salvage pathway; AMP from ADP: step 1/1. Functionally, catalyzes the reversible transfer of the terminal phosphate group between ATP and AMP. Plays an important role in cellular energy homeostasis and in adenine nucleotide metabolism. This Lactobacillus helveticus (strain DPC 4571) protein is Adenylate kinase.